The chain runs to 141 residues: Ribosome-binding factor A (141 aa).

The interval 120–141 (SPHVQRDLQENDDQEDDSEGSL) is disordered. Residues 129-141 (ENDDQEDDSEGSL) show a composition bias toward acidic residues.

Belongs to the RbfA family. In terms of assembly, monomer. Binds 30S ribosomal subunits, but not 50S ribosomal subunits or 70S ribosomes.

It is found in the cytoplasm. Functionally, one of several proteins that assist in the late maturation steps of the functional core of the 30S ribosomal subunit. Associates with free 30S ribosomal subunits (but not with 30S subunits that are part of 70S ribosomes or polysomes). Required for efficient processing of 16S rRNA. May interact with the 5'-terminal helix region of 16S rRNA. This is Ribosome-binding factor A from Zymomonas mobilis subsp. mobilis (strain ATCC 31821 / ZM4 / CP4).